We begin with the raw amino-acid sequence, 104 residues long: Large ribosomal subunit protein bL21 (104 aa).

This sequence belongs to the bacterial ribosomal protein bL21 family. As to quaternary structure, part of the 50S ribosomal subunit. Contacts protein L20.

Functionally, this protein binds to 23S rRNA in the presence of protein L20. This Azobacteroides pseudotrichonymphae genomovar. CFP2 protein is Large ribosomal subunit protein bL21.